The primary structure comprises 272 residues: Large ribosomal subunit protein uL29m (272 aa).

Disordered stretches follow at residues 1–29 (MAAAAMRPSMGALGRISSSTPSPLRPLTQ), 56–87 (KHRGESAIHRSGTRWRLSMSDEPLPRPVPRNK), and 227–272 (AAAT…TPRL). Positions 17-29 (SSSTPSPLRPLTQ) are enriched in low complexity. Low complexity-rich tracts occupy residues 227-238 (AAATEGEQQAAE) and 249-259 (PATAATPESAT). The segment covering 260-272 (IPSSQQQTDTPRL) has biased composition (polar residues).

Belongs to the universal ribosomal protein uL29 family. Component of the mitochondrial large ribosomal subunit. Mature mitochondrial ribosomes consist of a small (37S) and a large (54S) subunit. The 37S subunit contains at least 33 different proteins and 1 molecule of RNA (15S). The 54S subunit contains at least 45 different proteins and 1 molecule of RNA (21S).

It localises to the mitochondrion. The protein is Large ribosomal subunit protein uL29m (MRPL4) of Chaetomium globosum (strain ATCC 6205 / CBS 148.51 / DSM 1962 / NBRC 6347 / NRRL 1970) (Soil fungus).